The chain runs to 40 residues: Proteinase inhibitor IIB (40 aa).

Intrachain disulfides connect C2/C16, C6/C28, and C12/C38.

It belongs to the protease inhibitor I20 (potato type II proteinase inhibitor) family.

The protein resides in the secreted. In terms of biological role, inhibits chymotrypsin and subtilisin strongly. This is Proteinase inhibitor IIB from Solanum tuberosum (Potato).